A 154-amino-acid polypeptide reads, in one-letter code: Transcriptional regulator MraZ (154 aa).

SpoVT-AbrB domains are found at residues 6 to 53 (NSEA…PENV) and 83 to 126 (VEVI…SKEI).

Belongs to the MraZ family. In terms of assembly, forms oligomers.

The protein localises to the cytoplasm. It is found in the nucleoid. The protein is Transcriptional regulator MraZ of Phocaeicola vulgatus (strain ATCC 8482 / DSM 1447 / JCM 5826 / CCUG 4940 / NBRC 14291 / NCTC 11154) (Bacteroides vulgatus).